Consider the following 307-residue polypeptide: Ribonuclease Z (307 aa).

Residues histidine 63, histidine 65, aspartate 67, histidine 68, histidine 140, aspartate 211, and histidine 269 each coordinate Zn(2+). Aspartate 67 acts as the Proton acceptor in catalysis.

The protein belongs to the RNase Z family. In terms of assembly, homodimer. Zn(2+) serves as cofactor.

The catalysed reaction is Endonucleolytic cleavage of RNA, removing extra 3' nucleotides from tRNA precursor, generating 3' termini of tRNAs. A 3'-hydroxy group is left at the tRNA terminus and a 5'-phosphoryl group is left at the trailer molecule.. In terms of biological role, zinc phosphodiesterase, which displays some tRNA 3'-processing endonuclease activity. Probably involved in tRNA maturation, by removing a 3'-trailer from precursor tRNA. In Bacillus licheniformis (strain ATCC 14580 / DSM 13 / JCM 2505 / CCUG 7422 / NBRC 12200 / NCIMB 9375 / NCTC 10341 / NRRL NRS-1264 / Gibson 46), this protein is Ribonuclease Z.